We begin with the raw amino-acid sequence, 158 residues long: Large ribosomal subunit protein uL18 (158 aa).

The protein belongs to the universal ribosomal protein uL18 family. As to quaternary structure, part of the 50S ribosomal subunit. Contacts the 5S and 23S rRNAs.

Functionally, this is one of the proteins that bind and probably mediate the attachment of the 5S RNA into the large ribosomal subunit, where it forms part of the central protuberance. The sequence is that of Large ribosomal subunit protein uL18 from Picrophilus torridus (strain ATCC 700027 / DSM 9790 / JCM 10055 / NBRC 100828 / KAW 2/3).